The chain runs to 88 residues: Small ribosomal subunit protein uS15 (88 aa).

Belongs to the universal ribosomal protein uS15 family. Part of the 30S ribosomal subunit. Forms a bridge to the 50S subunit in the 70S ribosome, contacting the 23S rRNA.

Functionally, one of the primary rRNA binding proteins, it binds directly to 16S rRNA where it helps nucleate assembly of the platform of the 30S subunit by binding and bridging several RNA helices of the 16S rRNA. Forms an intersubunit bridge (bridge B4) with the 23S rRNA of the 50S subunit in the ribosome. This is Small ribosomal subunit protein uS15 from Hydrogenovibrio crunogenus (strain DSM 25203 / XCL-2) (Thiomicrospira crunogena).